We begin with the raw amino-acid sequence, 463 residues long: Ribosomal protein uS12 methylthiotransferase RimO (463 aa).

An MTTase N-terminal domain is found at P15–P130. Residues C24, C60, C89, C161, C165, and C168 each coordinate [4Fe-4S] cluster. The region spanning L147–A392 is the Radical SAM core domain. The 69-residue stretch at A395–V463 folds into the TRAM domain.

Belongs to the methylthiotransferase family. RimO subfamily. [4Fe-4S] cluster serves as cofactor.

It is found in the cytoplasm. It catalyses the reaction L-aspartate(89)-[ribosomal protein uS12]-hydrogen + (sulfur carrier)-SH + AH2 + 2 S-adenosyl-L-methionine = 3-methylsulfanyl-L-aspartate(89)-[ribosomal protein uS12]-hydrogen + (sulfur carrier)-H + 5'-deoxyadenosine + L-methionine + A + S-adenosyl-L-homocysteine + 2 H(+). Functionally, catalyzes the methylthiolation of an aspartic acid residue of ribosomal protein uS12. This Burkholderia pseudomallei (strain 668) protein is Ribosomal protein uS12 methylthiotransferase RimO.